Here is a 337-residue protein sequence, read N- to C-terminus: Glutathione transferase 3 (337 aa).

The Cytoplasmic segment spans residues methionine 1–cysteine 239. 4 positions are modified to phosphoserine: serine 66, serine 72, serine 99, and serine 116. The interval serine 66–alanine 95 is disordered. The tract at residues lysine 107–asparagine 132 is disordered. Residues glycine 117–asparagine 132 are compositionally biased toward polar residues. A helical transmembrane segment spans residues leucine 240 to isoleucine 260. Topologically, residues asparagine 261–threonine 313 are perinuclear space. A helical transmembrane segment spans residues valine 314–valine 336. A topological domain (cytoplasmic) is located at residue leucine 337.

It localises to the nucleus membrane. The chain is Glutathione transferase 3 (GTT3) from Saccharomyces cerevisiae (strain ATCC 204508 / S288c) (Baker's yeast).